Here is a 453-residue protein sequence, read N- to C-terminus: Chromosomal replication initiator protein DnaA (453 aa).

Residues 1–79 (MKSLIQEKWN…KTAIAEVINQ (79 aa)) form a domain I, interacts with DnaA modulators region. The domain II stretch occupies residues 79-111 (QDFEIEFVLLSQTKAEEKVQTQAPNKIKNESLS). Positions 112-330 (YLNPRYTFDT…GALTKIVALS (219 aa)) are domain III, AAA+ region. Residues G156, G158, K159, and T160 each coordinate ATP. The domain IV, binds dsDNA stretch occupies residues 331 to 453 (RLKKKEVDVI…VLIKKINPTP (123 aa)).

The protein belongs to the DnaA family. As to quaternary structure, oligomerizes as a right-handed, spiral filament on DNA at oriC.

The protein resides in the cytoplasm. Its function is as follows. Plays an essential role in the initiation and regulation of chromosomal replication. ATP-DnaA binds to the origin of replication (oriC) to initiate formation of the DNA replication initiation complex once per cell cycle. Binds the DnaA box (a 9 base pair repeat at the origin) and separates the double-stranded (ds)DNA. Forms a right-handed helical filament on oriC DNA; dsDNA binds to the exterior of the filament while single-stranded (ss)DNA is stabiized in the filament's interior. The ATP-DnaA-oriC complex binds and stabilizes one strand of the AT-rich DNA unwinding element (DUE), permitting loading of DNA polymerase. After initiation quickly degrades to an ADP-DnaA complex that is not apt for DNA replication. Binds acidic phospholipids. The chain is Chromosomal replication initiator protein DnaA from Lachnoclostridium phytofermentans (strain ATCC 700394 / DSM 18823 / ISDg) (Clostridium phytofermentans).